The sequence spans 288 residues: Prohibitin-2 (288 aa).

A helical; Signal-anchor for type II membrane protein membrane pass occupies residues 21–43 (GKYAFTGTGLLLALGLAGFAVQT). The AIM signature appears at 125-128 (YRTL).

This sequence belongs to the prohibitin family. As to quaternary structure, the mitochondrial prohibitin complex consists of two subunits (phb1 and phb2). The subunits assemble into a membrane-associated ring-shaped supercomplex of approximately 1 mDa.

The protein resides in the mitochondrion inner membrane. In terms of biological role, prohibitin probably acts as a holdase/unfoldase for the stabilization of newly synthesized mitochondrial proteins. Involved in mitophagy; may act as an adapter for atg8 that supports mitophagosome assembly. Negatively regulates the proteolytic processing of atg32 via the i-AAA protease. Acts as a negative regulator of the m-AAA protease. This chain is Prohibitin-2 (phb2), found in Schizosaccharomyces pombe (strain 972 / ATCC 24843) (Fission yeast).